The chain runs to 497 residues: 3-octaprenyl-4-hydroxybenzoate carboxy-lyase (497 aa).

A Mn(2+)-binding site is contributed by Asn172. Prenylated FMN contacts are provided by residues 175 to 177 (IYR), 189 to 191 (RWL), and 194 to 195 (RG). Glu238 contributes to the Mn(2+) binding site. Asp287 (proton donor) is an active-site residue.

It belongs to the UbiD family. In terms of assembly, homohexamer. Requires prenylated FMN as cofactor. It depends on Mn(2+) as a cofactor.

The protein resides in the cell membrane. The catalysed reaction is a 4-hydroxy-3-(all-trans-polyprenyl)benzoate + H(+) = a 2-(all-trans-polyprenyl)phenol + CO2. The protein operates within cofactor biosynthesis; ubiquinone biosynthesis. Catalyzes the decarboxylation of 3-octaprenyl-4-hydroxy benzoate to 2-octaprenylphenol, an intermediate step in ubiquinone biosynthesis. This chain is 3-octaprenyl-4-hydroxybenzoate carboxy-lyase, found in Enterobacter sp. (strain 638).